Here is a 558-residue protein sequence, read N- to C-terminus: Formate--tetrahydrofolate ligase (558 aa).

An ATP-binding site is contributed by 66–73 (TPAGEGKT).

The protein belongs to the formate--tetrahydrofolate ligase family.

It carries out the reaction (6S)-5,6,7,8-tetrahydrofolate + formate + ATP = (6R)-10-formyltetrahydrofolate + ADP + phosphate. It functions in the pathway one-carbon metabolism; tetrahydrofolate interconversion. The sequence is that of Formate--tetrahydrofolate ligase from Neisseria gonorrhoeae (strain NCCP11945).